Here is a 308-residue protein sequence, read N- to C-terminus: tRNA dimethylallyltransferase (308 aa).

An ATP-binding site is contributed by 11–18 (GSTATGKS). Residue 13-18 (TATGKS) coordinates substrate. An interaction with substrate tRNA region spans residues 36 to 39 (DSVQ).

The protein belongs to the IPP transferase family. As to quaternary structure, monomer. It depends on Mg(2+) as a cofactor.

It carries out the reaction adenosine(37) in tRNA + dimethylallyl diphosphate = N(6)-dimethylallyladenosine(37) in tRNA + diphosphate. In terms of biological role, catalyzes the transfer of a dimethylallyl group onto the adenine at position 37 in tRNAs that read codons beginning with uridine, leading to the formation of N6-(dimethylallyl)adenosine (i(6)A). This chain is tRNA dimethylallyltransferase, found in Bdellovibrio bacteriovorus (strain ATCC 15356 / DSM 50701 / NCIMB 9529 / HD100).